The sequence spans 227 residues: Cytochrome c oxidase subunit 2 (227 aa).

Topologically, residues 1-14 are mitochondrial intermembrane; it reads MACPVQLGFQDAAS. The helical transmembrane segment at 15-45 threads the bilayer; the sequence is PIMEELTYFHDHTLMIVFLISSLVLYIISLM. The Mitochondrial matrix portion of the chain corresponds to 46 to 59; that stretch reads LTTELTHTSTMDAQ. The chain crosses the membrane as a helical span at residues 60–87; it reads EVETVWTILPAVILILIALPSLRILYMM. Over 88-227 the chain is Mitochondrial intermembrane; sequence DEITTPSLTL…HFEEWLLAML (140 aa). Residues histidine 161, cysteine 196, glutamate 198, cysteine 200, histidine 204, and methionine 207 each contribute to the Cu cation site. Residue glutamate 198 participates in Mg(2+) binding.

Belongs to the cytochrome c oxidase subunit 2 family. As to quaternary structure, component of the cytochrome c oxidase (complex IV, CIV), a multisubunit enzyme composed of 14 subunits. The complex is composed of a catalytic core of 3 subunits MT-CO1, MT-CO2 and MT-CO3, encoded in the mitochondrial DNA, and 11 supernumerary subunits COX4I, COX5A, COX5B, COX6A, COX6B, COX6C, COX7A, COX7B, COX7C, COX8 and NDUFA4, which are encoded in the nuclear genome. The complex exists as a monomer or a dimer and forms supercomplexes (SCs) in the inner mitochondrial membrane with NADH-ubiquinone oxidoreductase (complex I, CI) and ubiquinol-cytochrome c oxidoreductase (cytochrome b-c1 complex, complex III, CIII), resulting in different assemblies (supercomplex SCI(1)III(2)IV(1) and megacomplex MCI(2)III(2)IV(2)). Found in a complex with TMEM177, COA6, COX18, COX20, SCO1 and SCO2. Interacts with TMEM177 in a COX20-dependent manner. Interacts with COX20. Interacts with COX16. Cu cation is required as a cofactor.

The protein localises to the mitochondrion inner membrane. The catalysed reaction is 4 Fe(II)-[cytochrome c] + O2 + 8 H(+)(in) = 4 Fe(III)-[cytochrome c] + 2 H2O + 4 H(+)(out). Its function is as follows. Component of the cytochrome c oxidase, the last enzyme in the mitochondrial electron transport chain which drives oxidative phosphorylation. The respiratory chain contains 3 multisubunit complexes succinate dehydrogenase (complex II, CII), ubiquinol-cytochrome c oxidoreductase (cytochrome b-c1 complex, complex III, CIII) and cytochrome c oxidase (complex IV, CIV), that cooperate to transfer electrons derived from NADH and succinate to molecular oxygen, creating an electrochemical gradient over the inner membrane that drives transmembrane transport and the ATP synthase. Cytochrome c oxidase is the component of the respiratory chain that catalyzes the reduction of oxygen to water. Electrons originating from reduced cytochrome c in the intermembrane space (IMS) are transferred via the dinuclear copper A center (CU(A)) of subunit 2 and heme A of subunit 1 to the active site in subunit 1, a binuclear center (BNC) formed by heme A3 and copper B (CU(B)). The BNC reduces molecular oxygen to 2 water molecules using 4 electrons from cytochrome c in the IMS and 4 protons from the mitochondrial matrix. This is Cytochrome c oxidase subunit 2 (MT-CO2) from Cheirogaleus medius (Fat-tailed dwarf lemur).